Here is a 193-residue protein sequence, read N- to C-terminus: Putative manganese efflux pump MntP (193 aa).

6 helical membrane passes run 6 to 26, 48 to 68, 71 to 91, 108 to 128, 132 to 152, and 165 to 185; these read VIFI…GIAC, AGMV…ISAF, WIAF…ALQG, LLGV…AFAV, NIGL…FLGF, and WVGV…LAEH.

The protein belongs to the MntP (TC 9.B.29) family.

It is found in the cell membrane. Its function is as follows. Probably functions as a manganese efflux pump. The polypeptide is Putative manganese efflux pump MntP (Dehalococcoides mccartyi (strain ATCC BAA-2100 / JCM 16839 / KCTC 5957 / BAV1)).